The following is a 495-amino-acid chain: Membrane-bound lytic murein transglycosylase F (495 aa).

The first 30 residues, 1–30 (MSRIRHHRFIQSCLVISTLLITLTGCQVES), serve as a signal peptide directing secretion. Residues 31–270 (EPKTKLEQIR…LLEEKYFGHV (240 aa)) form a non-LT domain region. The interval 272 to 495 (SFDYVDTRAF…SVSQAIETKK (224 aa)) is LT domain. Glutamate 315 is a catalytic residue.

It in the N-terminal section; belongs to the bacterial solute-binding protein 3 family. The protein in the C-terminal section; belongs to the transglycosylase Slt family.

It localises to the cell outer membrane. The catalysed reaction is Exolytic cleavage of the (1-&gt;4)-beta-glycosidic linkage between N-acetylmuramic acid (MurNAc) and N-acetylglucosamine (GlcNAc) residues in peptidoglycan, from either the reducing or the non-reducing ends of the peptidoglycan chains, with concomitant formation of a 1,6-anhydrobond in the MurNAc residue.. Murein-degrading enzyme that degrades murein glycan strands and insoluble, high-molecular weight murein sacculi, with the concomitant formation of a 1,6-anhydromuramoyl product. Lytic transglycosylases (LTs) play an integral role in the metabolism of the peptidoglycan (PG) sacculus. Their lytic action creates space within the PG sacculus to allow for its expansion as well as for the insertion of various structures such as secretion systems and flagella. The polypeptide is Membrane-bound lytic murein transglycosylase F (Aliivibrio fischeri (strain ATCC 700601 / ES114) (Vibrio fischeri)).